A 645-amino-acid polypeptide reads, in one-letter code: UPF0313 protein CLK_3381 (645 aa).

A Radical SAM core domain is found at 295 to 566; sequence AIKEVKFSIT…RMQRALLQFS (272 aa). [4Fe-4S] cluster contacts are provided by Cys309, Cys313, and Cys316. Residues 598–645 form a disordered region; that stretch reads NKPYKKSHKKNNVKNNNNHYNKNNNYNKNKDVSKKNKKNSLSKHKKRK. Positions 600-609 are enriched in basic residues; sequence PYKKSHKKNN. The span at 610–624 shows a compositional bias: low complexity; the sequence is VKNNNNHYNKNNNYN. Residues 632 to 645 show a composition bias toward basic residues; it reads KNKKNSLSKHKKRK.

The protein belongs to the UPF0313 family. It depends on [4Fe-4S] cluster as a cofactor.

The protein is UPF0313 protein CLK_3381 of Clostridium botulinum (strain Loch Maree / Type A3).